A 655-amino-acid polypeptide reads, in one-letter code: MGTSASSITALASCSRIAGQVGATMVAGSLLLLGFLSTITAQPEQKTLSLTGTYRHVDRTTGQVLTCDKCPAGTYVSEHCTNTSLRVCSSCPSGTFTRHENGIERCHDCSQPCPRPMIERLPCAALTDRECICPPGMYQSNGTCAPHTVCPVGWGVRKKGTENEDVRCKQCARGTFSDVPSSVMKCRAHTDCLGQNLMVVKQGTKETDNVCGVHLSSSSTTPSSPGIATFSHPEHTESHDVPSSTYEPQGMNSTDSNSTASVRTKVPSDIQEETVPDNTSSTSGKESTNRTLPNPPQLTHQQGPHHRHILKLLPSSMEATGEKSSTAIKAPKRGHPRQNPHKHFDINEHLPWMIVLFLLLVLVLIVVCSIRKSSRTLKKGPRQDPSAIMEKAGLKKSLTPTQNREKWIYYRNGHGIDILKLVAAQVGSQWKDIYQFLCNASEREVAAFSNGYTADHERAYAALQHWTIRGPEASLAQLISALRQHRRNDVVEKIRGLMEDTTQLETDKLALPMSPSPLSPSPIPSPNVKLENSTLLTVEPSPLDKNKGFFVDESEPLLRCDSTSSGSSALSRNGSFITKEKKDTVLRQVRLDPCDLQPIFDDMLHILNPEELRVIEEIPQAEDKLDRLFEIIGVKSQEASQTLLDSVYSHLPDLL.

A signal peptide spans 1 to 41 (MGTSASSITALASCSRIAGQVGATMVAGSLLLLGFLSTITA). Residues 42-349 (QPEQKTLSLT…PHKHFDINEH (308 aa)) lie on the Extracellular side of the membrane. TNFR-Cys repeat units lie at residues 50 to 88 (LTGTYRHVDRTTGQVLTCDKCPAGTYVSEHCTNTSLRVC), 90 to 131 (SCPS…DREC), 133 to 167 (CPPGMYQSNGTCAPHTVCPVGWGVRKKGTENEDVR), and 170 to 211 (QCAR…DNVC). 9 disulfides stabilise this stretch: C67–C80, C70–C88, C91–C106, C109–C123, C113–C131, C133–C144, C150–C168, C171–C186, and C192–C211. A glycan (N-linked (GlcNAc...) asparagine) is linked at N82. Disordered regions lie at residues 214–306 (HLSS…GPHH) and 318–338 (EATGEKSSTAIKAPKRGHPRQ). Over residues 216–225 (SSSSTTPSSP) the composition is skewed to low complexity. Composition is skewed to polar residues over residues 241-262 (VPSSTYEPQGMNSTDSNSTASV) and 276-302 (PDNTSSTSGKESTNRTLPNPPQLTHQQ). N252, N278, and N289 each carry an N-linked (GlcNAc...) asparagine glycan. A helical transmembrane segment spans residues 350-370 (LPWMIVLFLLLVLVLIVVCSI). A lipid anchor (S-palmitoyl cysteine) is attached at C368. The Cytoplasmic segment spans residues 371–655 (RKSSRTLKKG…SVYSHLPDLL (285 aa)). The region spanning 415–498 (GIDILKLVAA…DVVEKIRGLM (84 aa)) is the Death domain.

As to quaternary structure, associates with TRADD. Interacts with NGFR. Interacts with CASP8. In terms of processing, oxidized in response to reactive oxygen species (ROS), leading to endocytosis. As to expression, detected in brain (at protein level). Detected in corpus callosum oligodendrocytes. Detected in embryonic and adult brain.

It is found in the cell membrane. Functionally, promotes apoptosis, possibly via a pathway that involves the activation of NF-kappa-B. Can also promote apoptosis mediated by BAX and by the release of cytochrome c from the mitochondria into the cytoplasm. Trophic-factor deprivation triggers the cleavage of surface APP by beta-secretase to release sAPP-beta which is further cleaved to release an N-terminal fragment of APP (N-APP). Negatively regulates oligodendrocyte survival, maturation and myelination. Plays a role in signaling cascades triggered by stimulation of T-cell receptors, in the adaptive immune response and in the regulation of T-cell differentiation and proliferation. Negatively regulates T-cell responses and the release of cytokines such as IL4, IL5, IL10, IL13 and IFNG by Th2 cells. Negatively regulates the production of IgG, IgM and IgM in response to antigens. May inhibit the activation of JNK in response to T-cell stimulation. Also acts as a regulator of pyroptosis: recruits CASP8 in response to reactive oxygen species (ROS) and subsequent oxidation, leading to activation of GSDMC. The chain is Tumor necrosis factor receptor superfamily member 21 (Tnfrsf21) from Rattus norvegicus (Rat).